A 419-amino-acid polypeptide reads, in one-letter code: Protein-lysine N-methyltransferase EFM2 (419 aa).

Residues W222, 261 to 263 (GAG), D290, W318, and A340 contribute to the S-adenosyl-L-methionine site.

It belongs to the class I-like SAM-binding methyltransferase superfamily. METTL21 family.

It is found in the cytoplasm. S-adenosyl-L-methionine-dependent protein-lysine N-methyltransferase that mono- and dimethylates elongation factor 2 (EFT1/EFT2) at 'Lys-613' and methylates elongation factor 3A (YEF3). The sequence is that of Protein-lysine N-methyltransferase EFM2 from Saccharomyces cerevisiae (strain ATCC 204508 / S288c) (Baker's yeast).